The following is a 550-amino-acid chain: Chaperonin GroEL (550 aa).

Residues 30–33 (TLGP), Lys-51, 87–91 (DGTTT), Gly-415, 479–481 (NAA), and Asp-495 contribute to the ATP site.

It belongs to the chaperonin (HSP60) family. In terms of assembly, forms a cylinder of 14 subunits composed of two heptameric rings stacked back-to-back. Interacts with the co-chaperonin GroES.

Its subcellular location is the cytoplasm. It catalyses the reaction ATP + H2O + a folded polypeptide = ADP + phosphate + an unfolded polypeptide.. In terms of biological role, together with its co-chaperonin GroES, plays an essential role in assisting protein folding. The GroEL-GroES system forms a nano-cage that allows encapsulation of the non-native substrate proteins and provides a physical environment optimized to promote and accelerate protein folding. The polypeptide is Chaperonin GroEL (Burkholderia mallei (strain NCTC 10247)).